Reading from the N-terminus, the 351-residue chain is Phospho-N-acetylmuramoyl-pentapeptide-transferase (351 aa).

A run of 10 helical transmembrane segments spans residues 17–37 (TAYA…FIIL), 63–83 (IPTM…FFWI), 85–105 (FWNI…CLGF), 124–144 (FKIY…YYFG), 158–178 (SLKL…LISA), 190–210 (GLAI…AYLA), 230–250 (LVVF…FNAY), 254–274 (IMMG…TALI), 279–299 (ILFA…IIQV), and 328–348 (QVVI…LSTL).

The protein belongs to the glycosyltransferase 4 family. MraY subfamily. Requires Mg(2+) as cofactor.

Its subcellular location is the cell inner membrane. It carries out the reaction UDP-N-acetyl-alpha-D-muramoyl-L-alanyl-gamma-D-glutamyl-meso-2,6-diaminopimeloyl-D-alanyl-D-alanine + di-trans,octa-cis-undecaprenyl phosphate = di-trans,octa-cis-undecaprenyl diphospho-N-acetyl-alpha-D-muramoyl-L-alanyl-D-glutamyl-meso-2,6-diaminopimeloyl-D-alanyl-D-alanine + UMP. It participates in cell wall biogenesis; peptidoglycan biosynthesis. Functionally, catalyzes the initial step of the lipid cycle reactions in the biosynthesis of the cell wall peptidoglycan: transfers peptidoglycan precursor phospho-MurNAc-pentapeptide from UDP-MurNAc-pentapeptide onto the lipid carrier undecaprenyl phosphate, yielding undecaprenyl-pyrophosphoryl-MurNAc-pentapeptide, known as lipid I. The sequence is that of Phospho-N-acetylmuramoyl-pentapeptide-transferase from Borrelia turicatae (strain 91E135).